Consider the following 4034-residue polypeptide: Polyketide synthase-nonribosomal peptide synthetase ACE1 (4034 aa).

The region spanning 10 to 448 (TEPIAIIGSG…GANAHVILES (439 aa)) is the Ketosynthase family 3 (KS3) domain. Active-site for beta-ketoacyl synthase activity residues include C183, H322, and H368. The tract at residues 560-879 (VFTGQGAQWA…PYFGCLSRGT (320 aa)) is acyl transferase. Residues 951 to 1082 (NELLGTRLPD…GDLVVLLGEP (132 aa)) form an N-terminal hotdog fold region. The 307-residue stretch at 951–1257 (NELLGTRLPD…TKPLSPPSAA (307 aa)) folds into the PKS/mFAS DH domain. Residues 952-1252 (ELLGTRLPDD…LQGLHTKPLS (301 aa)) are dehydratase (DH) domain. The active-site Proton acceptor; for dehydratase activity is H983. The interval 1097-1257 (MKDIDEERFY…TKPLSPPSAA (161 aa)) is C-terminal hotdog fold. Catalysis depends on D1157, which acts as the Proton donor; for dehydratase activity. The methyltransferase (MT) domain stretch occupies residues 1396 to 1594 (NMLNRFYSDA…SGADIVTPHH (199 aa)). A ketoreductase (KR)domain region spans residues 2144 to 2317 (TYWLVGLTGG…AGSSVEIGCI (174 aa)). The 82-residue stretch at 2424-2505 (KSSEEVLDIL…LLLEFVQGLI (82 aa)) folds into the Carrier 1 domain. O-(pantetheine 4'-phosphoryl)serine is present on S2465. A disordered region spans residues 2512–2598 (KLDGSDGADA…SPTTSASMAS (87 aa)). Residues 2556–2577 (PSGPASPTSPSSATASPGRSRS) show a composition bias toward low complexity. The span at 2586-2598 (TPVSPTTSASMAS) shows a compositional bias: polar residues. A condensation region spans residues 2608–3037 (TVPVSFGQSR…ATSLNRPAIY (430 aa)). Residues 3073 to 3473 (KYATKFALRN…GGLIIEGRID (401 aa)) are adenylation. A Carrier 2 domain is found at 3598-3678 (AELGSDQARM…AMTDLVLSDD (81 aa)). S3638 carries the post-translational modification O-(pantetheine 4'-phosphoryl)serine. The reductase-like stretch occupies residues 3719 to 3944 (LTGATGFLGR…DFVSVENVAA (226 aa)).

It belongs to the NRP synthetase family.

It localises to the cytoplasm. It functions in the pathway secondary metabolite biosynthesis. In terms of biological role, hybrid PKS-NRPS synthetase; part of the gene cluster that mediates the biosynthesis of a tyrosine-derived cytochalasan acting as a fungal signal recognized by resistant rice plants and leads to avirulence in Pi33 resistant rice cultivars. The first step in the pathway is catalyzed by the hybrid PKS-NRPS ACE1, assisted by the enoyl reductase RAP1, that are responsible for fusion of the tyrosine precursor and the polyketide backbone. The polyketide synthase module (PKS) of ACE1 is responsible for the synthesis of the polyketide backbone and the downstream nonribosomal peptide synthetase (NRPS) amidates the carboxyl end of the polyketide with the tyrosine precursor. Because ACE1 lacks a designated enoylreductase (ER) domain, the required activity is provided the enoyl reductase RAP1. Reduction by the hydrolyase ORFZ, followed by dehydration and intra-molecular Diels-Alder cyclization by the Diels-Alderase ORF3 then yield the required isoindolone-fused macrocycle. A number of oxidative steps catalyzed by the tailoring enzymes identified within the cluster, including cytochrome P450 monooxygenases CYP1 to CYP4, the FAD-linked oxidoreductase OXR2 and the short-chain dehydrogenase/reductase OXR1, are further required to afford the final cytochalasans that confer avirulence and which have still to be identified. The monooxygenase CYP1 has been shown to be a site-selective C-18 hydroxylase whereas the function of CYP3 is the site-selective epoxidation of the C-6/C-7 olefin that is present in some intermediate compounds. Finally, SYN2 and RAP2 are not required for avirulence in Pi33 resistant rice cultivars. This chain is Polyketide synthase-nonribosomal peptide synthetase ACE1, found in Pyricularia oryzae (strain 70-15 / ATCC MYA-4617 / FGSC 8958) (Rice blast fungus).